We begin with the raw amino-acid sequence, 115 residues long: uncharacterized protein (115 aa).

This is an uncharacterized protein from Treponema pallidum (strain Nichols).